The following is a 145-amino-acid chain: uncharacterized protein (145 aa).

Disordered stretches follow at residues 1–41 (MRRL…PPGT) and 122–145 (RLPS…PLAL). The segment covering 20–34 (GGPQNGTSGCTTAPQ) has biased composition (polar residues). Residues 134–145 (DSQHPREVPLAL) show a composition bias toward basic and acidic residues.

Ubiquitous.

This is an uncharacterized protein from Homo sapiens (Human).